Reading from the N-terminus, the 690-residue chain is Elongation factor G (690 aa).

The tr-type G domain occupies 8-283 (SRCRNIGIMA…AVVDFLPSPS (276 aa)). GTP is bound by residues 17-24 (AHIDAGKT), 81-85 (DTPGH), and 135-138 (NKMD).

This sequence belongs to the TRAFAC class translation factor GTPase superfamily. Classic translation factor GTPase family. EF-G/EF-2 subfamily.

Its subcellular location is the cytoplasm. Functionally, catalyzes the GTP-dependent ribosomal translocation step during translation elongation. During this step, the ribosome changes from the pre-translocational (PRE) to the post-translocational (POST) state as the newly formed A-site-bound peptidyl-tRNA and P-site-bound deacylated tRNA move to the P and E sites, respectively. Catalyzes the coordinated movement of the two tRNA molecules, the mRNA and conformational changes in the ribosome. This Anaplasma marginale (strain St. Maries) protein is Elongation factor G.